A 353-amino-acid polypeptide reads, in one-letter code: Nicotinate-nucleotide--dimethylbenzimidazole phosphoribosyltransferase (353 aa).

E318 (proton acceptor) is an active-site residue.

The protein belongs to the CobT family.

It catalyses the reaction 5,6-dimethylbenzimidazole + nicotinate beta-D-ribonucleotide = alpha-ribazole 5'-phosphate + nicotinate + H(+). Its pathway is nucleoside biosynthesis; alpha-ribazole biosynthesis; alpha-ribazole from 5,6-dimethylbenzimidazole: step 1/2. Catalyzes the synthesis of alpha-ribazole-5'-phosphate from nicotinate mononucleotide (NAMN) and 5,6-dimethylbenzimidazole (DMB). The polypeptide is Nicotinate-nucleotide--dimethylbenzimidazole phosphoribosyltransferase (Chloroflexus aggregans (strain MD-66 / DSM 9485)).